The chain runs to 495 residues: Pentatricopeptide repeat-containing protein PPR5 homolog, chloroplastic (495 aa).

The disordered stretch occupies residues 1–24; the sequence is MLAYPTTSSPWPPRHHGAAAAPAA. The transit peptide at 1–29 directs the protein to the chloroplast; that stretch reads MLAYPTTSSPWPPRHHGAAAAPAARRHMA. 9 PPR repeats span residues 120–154, 155–189, 195–229, 230–264, 265–299, 300–334, 335–365, 370–404, and 405–439; these read DNGI…GCRP, DTSV…MKTI, NIVT…PVSP, DIYT…QCRP, DVIT…KEKP, THPT…GFKP, NYVT…LVSS, HLSS…GAVP, and SAST…GIVP. The segment at 455-495 is disordered; it reads DKKPRTVPSKNSASKPDVESANNSGTDTSSKPNLSVWQVAA. The span at 462 to 495 shows a compositional bias: polar residues; it reads PSKNSASKPDVESANNSGTDTSSKPNLSVWQVAA.

The protein belongs to the PPR family. P subfamily.

The protein localises to the plastid. The protein resides in the chloroplast. Its function is as follows. Involved in the biogenesis of the plastid translation machinery by promoting the splicing of group II introns in chloroplasts. The polypeptide is Pentatricopeptide repeat-containing protein PPR5 homolog, chloroplastic (Oryza sativa subsp. japonica (Rice)).